Reading from the N-terminus, the 536-residue chain is Lipid scramblase CLPTM1L (536 aa).

Topologically, residues 1–9 are cytoplasmic; the sequence is MLSRSSFTS. A helical transmembrane segment spans residues 10–30; sequence LAVGVFAVYVAHTCWVMYGIV. The Extracellular segment spans residues 31–284; it reads YTRPCPSGGA…VKGIFVDTNL (254 aa). Residues N92, N102, and N229 are each glycosylated (N-linked (GlcNAc...) asparagine). Residues 285 to 305 form a helical membrane-spanning segment; the sequence is YFLALTFFVAAFHLLFDFLAF. Residues 306-324 lie on the Cytoplasmic side of the membrane; it reads KNDISFWKKKRSMIGMSTK. A helical membrane pass occupies residues 325 to 342; it reads AVLWRCFSTVVIFLFLLD. At 343 to 346 the chain is on the extracellular side; sequence EQTS. Residues 347–364 traverse the membrane as a helical segment; the sequence is LLVLIPAGIGAVIELWKV. The Cytoplasmic portion of the chain corresponds to 365–402; that stretch reads KKALKMTVKWQGIRPKVQFGASNDSEKKTEEYDTQAMK. A helical transmembrane segment spans residues 403-423; that stretch reads YLSYLLYPLCIGGAAYSLLNV. At 424 to 428 the chain is on the extracellular side; that stretch reads KYKSW. The helical transmembrane segment at 429–449 threads the bilayer; it reads YSWLINSFVNGVYAFGFLFML. At 450–536 the chain is on the cytoplasmic side; that stretch reads PQLFVNYKMK…YEEKPKKKSS (87 aa).

The protein belongs to the CLPTM1 family.

Its subcellular location is the endoplasmic reticulum membrane. The catalysed reaction is a 6-(alpha-D-glucosaminyl)-1-(1,2-diacyl-sn-glycero-3-phospho)-1D-myo-inositol(in) = a 6-(alpha-D-glucosaminyl)-1-(1,2-diacyl-sn-glycero-3-phospho)-1D-myo-inositol(out). It carries out the reaction 6-(alpha-D-glucosaminyl)-(1-octadecanoyl,2-(9Z)-octadecenoyl-sn-glycero-3-phospho)-1D-myo-inositol(in) = 6-(alpha-D-glucosaminyl)-(1-octadecanoyl,2-(9Z)-octadecenoyl-sn-glycero-3-phospho)-1D-myo-inositol(out). It catalyses the reaction a 1,2-diacyl-sn-glycero-3-phospho-(1D-myo-inositol)(in) = a 1,2-diacyl-sn-glycero-3-phospho-(1D-myo-inositol)(out). The enzyme catalyses a 1,2-diacyl-sn-glycero-3-phosphocholine(in) = a 1,2-diacyl-sn-glycero-3-phosphocholine(out). The catalysed reaction is a 1,2-diacyl-sn-glycero-3-phosphoethanolamine(in) = a 1,2-diacyl-sn-glycero-3-phosphoethanolamine(out). In terms of biological role, scramblase that mediates the translocation of glucosaminylphosphatidylinositol (alpha-D-GlcN-(1-6)-(1,2-diacyl-sn-glycero-3-phospho)-1D-myo-inositol, GlcN-PI) across the endoplasmic reticulum (ER) membrane, from the cytosolic leaflet to the luminal leaflet of the ER membrane, where it participates in the biosynthesis of glycosylphosphatidylinositol (GPI). GPI is a lipid glycoconjugate involved in post-translational modification of proteins. Can also translocate 1,2-diacyl-sn-glycero-3-phospho-(1D-myo-inositol) (phosphatidylinositol or PI), as well as several other phospholipids (1,2-diacyl-sn-glycero-3-phosphocholine, 1,2-diacyl-sn-glycero-3-phosphoethanolamine), and N-acetylglucosaminylphosphatidylinositol (GlcNAc-PI) in vitro. The sequence is that of Lipid scramblase CLPTM1L (CLPTM1L) from Gallus gallus (Chicken).